Reading from the N-terminus, the 739-residue chain is Tegument protein UL47 (739 aa).

Residues 1–13 (MDAARDGRPERRR) show a composition bias toward basic and acidic residues. 2 disordered regions span residues 1 to 123 (MDAA…QDYL) and 154 to 198 (QFPP…DDAA). Positions 10 to 30 (ERRRAVSGTYRTHPFQRPSAR) match the Nuclear localization signal motif. Residues 28–53 (SARRSAGRPARCGRRGRGAPRVRRPR) are compositionally biased toward basic residues. Residues 62 to 87 (EDTSEDENVYDYIDGDSSDSADDYDS) are compositionally biased toward acidic residues. The short motif at 94-121 (RGPNHGAGDAMDTDAPPERAPEGGAPQD) is the Nuclear export signal element. Positions 483–493 (LSAYLTLFVAL) match the Nuclear export signal motif.

This sequence belongs to the alphaherpesvirinae HHV-1 UL47 family. Interacts with US3 kinase. Interacts with UL31 and UL34; these interactions seem important for efficient virion nuclear egress. Interacts with UL41/VHS. Interacts with host DDB1. In terms of processing, monoubiquitinated. Post-translationally, phosphorylated by US3. This phosphorylation is required for proper nuclear localization.

It localises to the virion tegument. Its subcellular location is the host nucleus. The protein resides in the host cytoplasm. Functionally, tegument protein that can bind to various RNA transcripts. Plays a role in the attenuation of selective viral and cellular mRNA degradation by modulating the activity of host shutoff RNase UL41/VHS. Also plays a role in the primary envelopment of virions in the perinuclear space, probably by interacting with two nuclear egress proteins UL31 and UL34. In Bovine herpesvirus 1.1 (strain Cooper) (BoHV-1), this protein is Tegument protein UL47.